The following is a 385-amino-acid chain: Protein pelota homolog (385 aa).

A Glycyl lysine isopeptide (Lys-Gly) (interchain with G-Cter in SUMO2) cross-link involves residue Lys162. Phosphoserine is present on residues Ser374, Ser380, Ser381, and Ser382.

The protein belongs to the eukaryotic release factor 1 family. Pelota subfamily. In terms of assembly, component of the Pelota-HBS1L complex, also named Dom34-Hbs1 complex, composed of PELO and HBS1L. Interacts with PINK1. Interacts with ABCE1. Interacts with CNOT4. A divalent metal cation serves as cofactor.

The protein localises to the cytoplasm. In terms of biological role, component of the Pelota-HBS1L complex, a complex that recognizes stalled ribosomes and triggers the No-Go Decay (NGD) pathway. In the Pelota-HBS1L complex, PELO recognizes ribosomes stalled at the 3' end of an mRNA and engages stalled ribosomes by destabilizing mRNA in the mRNA channel. Following mRNA extraction from stalled ribosomes by the SKI complex, the Pelota-HBS1L complex promotes recruitment of ABCE1, which drives the disassembly of stalled ribosomes, followed by degradation of damaged mRNAs as part of the NGD pathway. As part of the PINK1-regulated signaling, upon mitochondrial damage is recruited to the ribosome/mRNA-ribonucleoprotein complex associated to mitochondrial outer membrane thereby enabling the recruitment of autophagy receptors and induction of mitophagy. The chain is Protein pelota homolog (PELO) from Bos taurus (Bovine).